Here is a 738-residue protein sequence, read N- to C-terminus: Ethylene receptor 1 (738 aa).

Helical transmembrane passes span isoleucine 23–valine 43, tryptophan 53–leucine 73, and valine 92–leucine 112. Cu cation is bound by residues cysteine 65 and histidine 69. A GAF domain is found at aspartate 158–leucine 307. Residues valine 350–glutamate 585 enclose the Histidine kinase domain. At histidine 353 the chain carries Phosphohistidine; by autocatalysis. Residues asparagine 470–lysine 473, aspartate 513, lysine 529, serine 544, and leucine 548 contribute to the ADP site. Residues lysine 611–leucine 729 enclose the Response regulatory domain. A 4-aspartylphosphate modification is found at aspartate 659. Lysine 714 participates in a covalent cross-link: Glycyl lysine isopeptide (Lys-Gly) (interchain with G-Cter in ubiquitin).

It belongs to the ethylene receptor family. As to quaternary structure, homodimer; disulfide-linked. Heteromer with ERS1, ERS2, ETR2 and EIN4. Interacts with AHP1, AHP2 and AHP3. Interacts with RTE1. Interacts with EIN2. It depends on Cu cation as a cofactor. In terms of processing, autophosphorylated. Phosphorylation at His-353 modulates the interaction with EIN2. Leaves, roots, stems, seedlings, flowers, anthers, carpels and ovules.

The protein resides in the endoplasmic reticulum membrane. The enzyme catalyses ATP + protein L-histidine = ADP + protein N-phospho-L-histidine.. Functionally, ethylene receptor related to bacterial two-component regulators. Acts as a redundant negative regulator of ethylene signaling. In the presence of ethylene, the auto-kinase activity of ETR1 is inhibited and the non-phosphorylated kinase domain binds tightly to the corresponding domain of EIN2. In Arabidopsis thaliana (Mouse-ear cress), this protein is Ethylene receptor 1.